Reading from the N-terminus, the 535-residue chain is Methylmalonate-semialdehyde/malonate-semialdehyde dehydrogenase [acylating], mitochondrial (535 aa).

Residues 1 to 32 (MAAAVAAAAAVRSRILQVSSKVNSTWYPASSF) constitute a mitochondrion transit peptide. An N6-acetyllysine; alternate mark is found at lysine 47, lysine 52, lysine 55, and lysine 76. N6-succinyllysine; alternate is present on residues lysine 47, lysine 52, lysine 55, and lysine 76. Residue lysine 87 is modified to N6-acetyllysine. Lysine 117 and lysine 129 each carry N6-acetyllysine; alternate. N6-succinyllysine; alternate occurs at positions 117 and 129. NAD(+)-binding residues include alanine 183, phenylalanine 185, lysine 209, glutamate 212, arginine 213, and serine 262. Serine 262 is subject to Phosphoserine. Lysine 298 bears the N6-acetyllysine mark. The active-site Nucleophile is the cysteine 317. Residues lysine 330 and lysine 331 each carry the N6-acetyllysine modification. Residues lysine 364 and lysine 376 each carry the N6-acetyllysine; alternate modification. 2 positions are modified to N6-succinyllysine; alternate: lysine 364 and lysine 376. Residue serine 380 is modified to Phosphoserine. Position 391 is an N6-succinyllysine (lysine 391). Glutamate 417 is a binding site for NAD(+). Lysine 500 carries the N6-acetyllysine modification. Lysine 517 bears the N6-succinyllysine mark.

The protein belongs to the aldehyde dehydrogenase family. In terms of assembly, homotetramer. As to expression, expressed in the head and flagellum of epididymal sperm but not in testicular sperm (at protein level). Kidney &gt; liver &gt; heart &gt; muscle &gt; brain.

The protein localises to the mitochondrion. The enzyme catalyses 3-oxopropanoate + NAD(+) + CoA + H2O = hydrogencarbonate + acetyl-CoA + NADH + H(+). It carries out the reaction 2-methyl-3-oxopropanoate + NAD(+) + CoA + H2O = propanoyl-CoA + hydrogencarbonate + NADH + H(+). It catalyses the reaction (R)-2-methyl-3-oxopropanoate + NAD(+) + CoA + H2O = propanoyl-CoA + hydrogencarbonate + NADH + H(+). The catalysed reaction is (S)-2-methyl-3-oxopropanoate + NAD(+) + CoA + H2O = propanoyl-CoA + hydrogencarbonate + NADH + H(+). In terms of biological role, malonate and methylmalonate semialdehyde dehydrogenase involved in the catabolism of valine, thymine, and compounds catabolized by way of beta-alanine, including uracil and cytidine. The sequence is that of Methylmalonate-semialdehyde/malonate-semialdehyde dehydrogenase [acylating], mitochondrial from Rattus norvegicus (Rat).